We begin with the raw amino-acid sequence, 548 residues long: ATP synthase subunit alpha (548 aa).

Glycine 172–threonine 179 contacts ATP.

The protein belongs to the ATPase alpha/beta chains family. F-type ATPases have 2 components, CF(1) - the catalytic core - and CF(0) - the membrane proton channel. CF(1) has five subunits: alpha(3), beta(3), gamma(1), delta(1), epsilon(1). CF(0) has three main subunits: a(1), b(2) and c(9-12). The alpha and beta chains form an alternating ring which encloses part of the gamma chain. CF(1) is attached to CF(0) by a central stalk formed by the gamma and epsilon chains, while a peripheral stalk is formed by the delta and b chains.

It localises to the cell membrane. It catalyses the reaction ATP + H2O + 4 H(+)(in) = ADP + phosphate + 5 H(+)(out). Its function is as follows. Produces ATP from ADP in the presence of a proton gradient across the membrane. The alpha chain is a regulatory subunit. This chain is ATP synthase subunit alpha, found in Mycobacteroides abscessus (strain ATCC 19977 / DSM 44196 / CCUG 20993 / CIP 104536 / JCM 13569 / NCTC 13031 / TMC 1543 / L948) (Mycobacterium abscessus).